The following is a 333-amino-acid chain: L-lactate dehydrogenase B chain (333 aa).

NAD(+)-binding positions include 29–57 (GQVGMACAISVLEKGLCDELALVDVLEDK) and arginine 99. The substrate site is built by arginine 106, asparagine 138, and arginine 169. Asparagine 138 lines the NAD(+) pocket. Histidine 193 serves as the catalytic Proton acceptor. Residue threonine 248 participates in substrate binding.

This sequence belongs to the LDH/MDH superfamily. LDH family. As to quaternary structure, homotetramer.

It is found in the cytoplasm. The catalysed reaction is (S)-lactate + NAD(+) = pyruvate + NADH + H(+). Its pathway is fermentation; pyruvate fermentation to lactate; (S)-lactate from pyruvate: step 1/1. Functionally, interconverts simultaneously and stereospecifically pyruvate and lactate with concomitant interconversion of NADH and NAD(+). This Sceloporus woodi (Florida scrub lizard) protein is L-lactate dehydrogenase B chain (LDHB).